Here is a 593-residue protein sequence, read N- to C-terminus: Isocitrate dehydrogenase kinase/phosphatase (593 aa).

ATP-binding positions include 324-330 (APGIRGL) and K345. D380 is an active-site residue.

The protein belongs to the AceK family.

The protein resides in the cytoplasm. It catalyses the reaction L-seryl-[isocitrate dehydrogenase] + ATP = O-phospho-L-seryl-[isocitrate dehydrogenase] + ADP + H(+). Bifunctional enzyme which can phosphorylate or dephosphorylate isocitrate dehydrogenase (IDH) on a specific serine residue. This is a regulatory mechanism which enables bacteria to bypass the Krebs cycle via the glyoxylate shunt in response to the source of carbon. When bacteria are grown on glucose, IDH is fully active and unphosphorylated, but when grown on acetate or ethanol, the activity of IDH declines drastically concomitant with its phosphorylation. This chain is Isocitrate dehydrogenase kinase/phosphatase, found in Dechloromonas aromatica (strain RCB).